Consider the following 335-residue polypeptide: Abasic site processing protein HMCES (335 aa).

Cysteine 2 acts as the Nucleophile in catalysis. A Thiazolidine linkage to a ring-opened DNA abasic site modification is found at cysteine 2. A compositionally biased stretch (basic and acidic residues) spans 24-39 (QGGRKWPNWRDGDSDK). The segment at 24 to 51 (QGGRKWPNWRDGDSDKYQPSYNKSPQSN) is disordered. The span at 40 to 51 (YQPSYNKSPQSN) shows a compositional bias: polar residues. Residue glutamate 129 is part of the active site. Positions 284–335 (LQNKSPKKEESHSIQSPKLSQFGAPPKKTSAGLMQQWLKKEDGEPSPKRAKK) are disordered. Residues 321–335 (LKKEDGEPSPKRAKK) show a composition bias toward basic and acidic residues.

The protein belongs to the SOS response-associated peptidase family. Post-translationally, ubiquitination of the hmces DNA-protein cross-link by rfwd3 may promotes its degradation.

It localises to the chromosome. Formation and reversal of DNA-protein cross-link depends on DNA context. Catalyzes formation of the thiazolidine linkage in presence of abasic sites in single-stranded DNA. Mediates the reversal of the thiazolidine cross-link in presence of double stranded DNA. Functionally, sensor of abasic sites in single-stranded DNA (ssDNA) required to preserve genome integrity by promoting error-free repair of abasic sites. Acts as an enzyme that recognizes and binds abasic sites in ssDNA at replication forks and chemically modifies the lesion by forming a covalent cross-link with DNA: forms a stable thiazolidine linkage between a ring-opened abasic site and the alpha-amino and sulfhydryl substituents of its N-terminal catalytic cysteine residue. The hmces DNA-protein cross-link is then either reversed or degraded. Hmces is able to catalyze the reversal of its thiazolidine cross-link and cycle between a cross-link and a non-cross-linked state depending on DNA context: mediates self-reversal of the thiazolidine cross-link in double stranded DNA, allowing apex1 to initiate downstream repair of abasic sites. The hmces DNA-protein cross-link can also be degraded by the sprtn metalloprotease following unfolding by the brip1/fancj helicase. Promotes error-free repair of abasic sites by protecting abasic sites from translesion synthesis (TLS) polymerases and endonucleases that are error-prone and would generate mutations and double-strand breaks. Acts as a protease: mediates autocatalytic processing of its N-terminal methionine in order to expose the catalytic cysteine. The hmces DNA-protein cross-link is then either reversed or degraded. According to a model, the HMCES DNA-protein cross-link. This is Abasic site processing protein HMCES from Xenopus tropicalis (Western clawed frog).